We begin with the raw amino-acid sequence, 400 residues long: NADH-quinone oxidoreductase subunit D (400 aa).

It belongs to the complex I 49 kDa subunit family. In terms of assembly, NDH-1 is composed of 14 different subunits. Subunits NuoB, C, D, E, F, and G constitute the peripheral sector of the complex.

Its subcellular location is the cell inner membrane. The catalysed reaction is a quinone + NADH + 5 H(+)(in) = a quinol + NAD(+) + 4 H(+)(out). NDH-1 shuttles electrons from NADH, via FMN and iron-sulfur (Fe-S) centers, to quinones in the respiratory chain. The immediate electron acceptor for the enzyme in this species is believed to be a menaquinone. Couples the redox reaction to proton translocation (for every two electrons transferred, four hydrogen ions are translocated across the cytoplasmic membrane), and thus conserves the redox energy in a proton gradient. The sequence is that of NADH-quinone oxidoreductase subunit D from Chlorobium phaeovibrioides (strain DSM 265 / 1930) (Prosthecochloris vibrioformis (strain DSM 265)).